Reading from the N-terminus, the 545-residue chain is Glucose-6-phosphate isomerase (545 aa).

The active-site Proton donor is the glutamate 351. Catalysis depends on residues histidine 382 and lysine 510.

Belongs to the GPI family.

It localises to the cytoplasm. The catalysed reaction is alpha-D-glucose 6-phosphate = beta-D-fructose 6-phosphate. The protein operates within carbohydrate biosynthesis; gluconeogenesis. It functions in the pathway carbohydrate degradation; glycolysis; D-glyceraldehyde 3-phosphate and glycerone phosphate from D-glucose: step 2/4. In terms of biological role, catalyzes the reversible isomerization of glucose-6-phosphate to fructose-6-phosphate. The polypeptide is Glucose-6-phosphate isomerase (Shewanella denitrificans (strain OS217 / ATCC BAA-1090 / DSM 15013)).